Consider the following 122-residue polypeptide: Serum amyloid A-2 protein (122 aa).

Residues 1–18 (MKLLSGLLLCSLVLGVSG) form the signal peptide. Residue Q19 is modified to Pyrrolidone carboxylic acid. Residues 90 to 122 (GAEDSMADQAANEWGRSGKDPNHFRPKGLPDKY) are disordered. The span at 105-122 (RSGKDPNHFRPKGLPDKY) shows a compositional bias: basic and acidic residues.

This sequence belongs to the SAA family. As to quaternary structure, apolipoprotein of the HDL complex. In terms of tissue distribution, expressed by the liver; secreted in plasma.

Its subcellular location is the secreted. Major acute phase reactant. This Oryctolagus cuniculus (Rabbit) protein is Serum amyloid A-2 protein (SAA2).